Reading from the N-terminus, the 306-residue chain is Agmatinase (306 aa).

Residues His-128, Asp-151, His-153, Asp-155, Asp-232, and Asp-234 each contribute to the Mn(2+) site.

Belongs to the arginase family. Agmatinase subfamily. Mn(2+) is required as a cofactor.

It carries out the reaction agmatine + H2O = urea + putrescine. The protein operates within amine and polyamine biosynthesis; putrescine biosynthesis via agmatine pathway; putrescine from agmatine: step 1/1. In terms of biological role, catalyzes the formation of putrescine from agmatine. This chain is Agmatinase (speB), found in Proteus mirabilis.